The following is a 487-amino-acid chain: MKAQPKASHFIDGEYVEDSDGTVIESLYPATGEVIARLHAATPAIVEKAIAAAKSAQPEWAAMSPMARGRILKRAADIMRERNRELSELETLDTGKPIQETIVADPTSGADAFEFFGGVAPAGLNGSHIPLGQDFAYTKRVPLGVCVGIGAWNYPQQIACWKGAPALIAGNAMVFKPSENTPLGALKIAEILHEAGLPKGLFNVIQGDRDTGPLLVNHPDVAKVSLTGSVPTGRRVAAAAAGSLKHVTMELGGKSPLIVFDDADLDSAVGGAMLGNFYSTGQVCSNGTRVFVQKGIKTEFLKRLKARTEAMLIGDPMDEATQIGPMVSWAQREKVVAYIEKGKAEGATLVAGGGIPNNVSGEGYYVQPTVFADVTDEMTIAREEIFGPVMSVLDFDDEDEVITRANASEFGLSGGVFTADLTRAHRVVDRLEAGTLWINAYNLAPVEIPFGGSKQSGFGRENSLAALEHYSELKTVYVGMGPVQAPY.

Residues S26 and D93 each contribute to the K(+) site. 150–152 (GAW) provides a ligand contact to NAD(+). Residue K162 is the Charge relay system of the active site. Residues 176-179 (KPSE) and 229-232 (SVPT) each bind NAD(+). L244 contributes to the K(+) binding site. The Proton acceptor role is filled by E250. Residues G252, C284, and E384 each contribute to the NAD(+) site. Catalysis depends on C284, which acts as the Nucleophile. Cysteine sulfenic acid (-SOH) is present on C284. The K(+) site is built by K454 and G457. The active-site Charge relay system is the E461.

This sequence belongs to the aldehyde dehydrogenase family. In terms of assembly, dimer of dimers. Requires K(+) as cofactor.

The enzyme catalyses betaine aldehyde + NAD(+) + H2O = glycine betaine + NADH + 2 H(+). Its pathway is amine and polyamine biosynthesis; betaine biosynthesis via choline pathway; betaine from betaine aldehyde: step 1/1. Involved in the biosynthesis of the osmoprotectant glycine betaine. Catalyzes the irreversible oxidation of betaine aldehyde to the corresponding acid. This chain is Betaine aldehyde dehydrogenase, found in Rhizobium etli (strain CIAT 652).